The following is a 677-amino-acid chain: Electrogenic aspartate/glutamate antiporter SLC25A12, mitochondrial (677 aa).

Position 2 is an N-acetylalanine (Ala-2). The regulatory N-terminal domain stretch occupies residues 2-294 (AVKVHTTKRG…TLADIERIAP (293 aa)). At 2–329 (AVKVHTTKRG…WLQIAESAYR (328 aa)) the chain is on the mitochondrial intermembrane side. EF-hand domains follow at residues 40–85 (VQRY…SVLC), 86–121 (APDSMFIVAFQLFDKSGNGEVTFENVKEIFGQTIIH), 122–156 (HHIPFNWDCEFIRLHFGHNRKKHLNYVEFTQFLQE), and 157–192 (LQLEHARQAFALKDKSKSGMISGLDFSDVMVTIRSH). The Ca(2+) site is built by Asp-65, Thr-67, Asp-69, Leu-71, and Glu-76. The tract at residues 295-310 (LAEGALPYNLAELQRQ) is linker loop domain. Residues 320 to 612 (WLQIAESAYR…RWFYIDFGGL (293 aa)) form a carrier domain region. 3 Solcar repeats span residues 324-416 (AESA…VRDK), 424-508 (IPLP…CKLL), and 516-604 (VGGI…LQRW). The chain crosses the membrane as a helical span at residues 330–347 (FTLGSVAGAVGATAVYPI). Over 348 to 390 (DLVKTRMQNQRGTGSVVGELMYKNSFDCFKKVLRYEGFFGLYR) the chain is Mitochondrial matrix. Residues 391–410 (GLIPQLIGVAPEKAIKLTVN) form a helical membrane-spanning segment. Residues 411-433 (DFVRDKFTKRDGSIPLPAEILAG) lie on the Mitochondrial intermembrane side of the membrane. The helical transmembrane segment at 434–447 (GCAGGSQVIFTNPL) threads the bilayer. Over 448 to 482 (EIVKIRLQVAGEITTGPRVSALNVLQDLGLFGLYK) the chain is Mitochondrial matrix. The chain crosses the membrane as a helical span at residues 483–502 (GAKACFLRDIPFSAIYFPVY). At 503 to 521 (AHCKLLLADENGRVGGINL) the chain is on the mitochondrial intermembrane side. A helical membrane pass occupies residues 522–539 (LTAGALAGVPAASLVTPA). Over 540–578 (DVIKTRLQVAARAGQTTYSGVVDCFRKILREEGPSAFWK) the chain is Mitochondrial matrix. The helical transmembrane segment at 579–598 (GTAARVFRSSPQFGVTLVTY) threads the bilayer. Residues 599–677 (ELLQRWFYID…AQPKAAAAAQ (79 aa)) are Mitochondrial intermembrane-facing. The C-terminal domain stretch occupies residues 613–677 (KPSGSEPTPK…AQPKAAAAAQ (65 aa)).

The protein belongs to the mitochondrial carrier (TC 2.A.29) family. As to quaternary structure, homodimer (via N-terminus).

Its subcellular location is the mitochondrion inner membrane. It catalyses the reaction L-aspartate(in) + L-glutamate(out) + H(+)(out) = L-aspartate(out) + L-glutamate(in) + H(+)(in). The enzyme catalyses 3-sulfino-L-alanine(out) + L-glutamate(in) + H(+)(in) = 3-sulfino-L-alanine(in) + L-glutamate(out) + H(+)(out). The catalysed reaction is 3-sulfino-L-alanine(out) + L-aspartate(in) = 3-sulfino-L-alanine(in) + L-aspartate(out). Mitochondrial electrogenic aspartate/glutamate antiporter that favors efflux of aspartate and entry of glutamate and proton within the mitochondria as part of the malate-aspartate shuttle. Also mediates the uptake of L-cysteinesulfinate (3-sulfino-L-alanine) by mitochondria in exchange of L-glutamate and proton. Can also exchange L-cysteinesulfinate with aspartate in their anionic form without any proton translocation. Lacks transport activity towards L-glutamine or gamma-aminobutyric acid (GABA). In Mus musculus (Mouse), this protein is Electrogenic aspartate/glutamate antiporter SLC25A12, mitochondrial.